Here is a 212-residue protein sequence, read N- to C-terminus: 3-isopropylmalate dehydratase small subunit (212 aa).

Belongs to the LeuD family. LeuD type 1 subfamily. In terms of assembly, heterodimer of LeuC and LeuD.

The enzyme catalyses (2R,3S)-3-isopropylmalate = (2S)-2-isopropylmalate. Its pathway is amino-acid biosynthesis; L-leucine biosynthesis; L-leucine from 3-methyl-2-oxobutanoate: step 2/4. Catalyzes the isomerization between 2-isopropylmalate and 3-isopropylmalate, via the formation of 2-isopropylmaleate. The chain is 3-isopropylmalate dehydratase small subunit from Pseudomonas aeruginosa (strain UCBPP-PA14).